The sequence spans 541 residues: Cytosolic phospholipase A2 gamma (541 aa).

Positions 1–541 constitute a PLA2c domain; sequence MGSSEVSIIP…KDSARSCCLA (541 aa). The active-site Nucleophile is the Ser82. A required for lipid droplet localization region spans residues 260–292; the sequence is LTLKGLWRRAVANAKSIGHLIFARLLRLQESSQ. The residue at position 337 (Ser337) is a Phosphoserine. Asp385 acts as the Proton acceptor in catalysis. Cys538 is subject to Cysteine methyl ester. The S-farnesyl cysteine moiety is linked to residue Cys538. The propeptide at 539–541 is removed in mature form; sequence CLA.

(Microbial infection) Interacts with HCV non-structural protein 4B/NS4B; this interaction likely initiates the recruitment of replication complexes to lipid droplets. In terms of tissue distribution, highly expressed in heart and skeletal muscle.

It localises to the cell membrane. The protein resides in the endoplasmic reticulum membrane. It is found in the mitochondrion membrane. Its subcellular location is the lipid droplet. The catalysed reaction is a 1,2-diacyl-sn-glycero-3-phosphocholine + H2O = a 1-acyl-sn-glycero-3-phosphocholine + a fatty acid + H(+). It carries out the reaction a 1-O-alkyl-2-acyl-sn-glycero-3-phosphocholine + H2O = a 1-O-alkyl-sn-glycero-3-phosphocholine + a fatty acid + H(+). The enzyme catalyses 1,2-dihexadecanoyl-sn-glycero-3-phosphocholine + H2O = 1-hexadecanoyl-sn-glycero-3-phosphocholine + hexadecanoate + H(+). It catalyses the reaction 1-hexadecanoyl-2-(9Z-octadecenoyl)-sn-glycero-3-phosphocholine + H2O = 1-hexadecanoyl-sn-glycero-3-phosphocholine + (9Z)-octadecenoate + H(+). The catalysed reaction is 1-hexadecanoyl-2-(9Z,12Z-octadecadienoyl)-sn-glycero-3-phosphocholine + H2O = (9Z,12Z)-octadecadienoate + 1-hexadecanoyl-sn-glycero-3-phosphocholine + H(+). It carries out the reaction 1-hexadecanoyl-2-(5Z,8Z,11Z,14Z-eicosatetraenoyl)-sn-glycero-3-phosphocholine + H2O = 1-hexadecanoyl-sn-glycero-3-phosphocholine + (5Z,8Z,11Z,14Z)-eicosatetraenoate + H(+). The enzyme catalyses 1-O-hexadecyl-2-(5Z,8Z,11Z,14Z)-eicosatetraenoyl-sn-glycero-3-phosphocholine + H2O = 1-O-hexadecyl-sn-glycero-3-phosphocholine + (5Z,8Z,11Z,14Z)-eicosatetraenoate + H(+). It catalyses the reaction 1-hexadecanoyl-2-(5Z,8Z,11Z,14Z-eicosatetraenoyl)-sn-glycero-3-phosphocholine + H2O = 2-(5Z,8Z,11Z,14Z)-eicosatetraenoyl-sn-glycero-3-phosphocholine + hexadecanoate + H(+). The catalysed reaction is a 1-acyl-sn-glycero-3-phosphocholine + H2O = sn-glycerol 3-phosphocholine + a fatty acid + H(+). It carries out the reaction 1-hexadecanoyl-sn-glycero-3-phosphocholine + H2O = sn-glycerol 3-phosphocholine + hexadecanoate + H(+). The enzyme catalyses 2 1-hexadecanoyl-sn-glycero-3-phosphocholine = 1,2-dihexadecanoyl-sn-glycero-3-phosphocholine + sn-glycerol 3-phosphocholine. It catalyses the reaction 1-hexadecanoyl-sn-glycero-3-phosphoethanolamine + 1-hexadecanoyl-sn-glycero-3-phosphocholine = 1,2-dihexadecanoyl-sn-glycero-3-phosphoethanolamine + sn-glycerol 3-phosphocholine. The catalysed reaction is 1-hexadecanoyl-sn-glycero-3-phosphoethanolamine + 1-hexadecanoyl-sn-glycero-3-phosphocholine = sn-glycero-3-phosphoethanolamine + 1,2-dihexadecanoyl-sn-glycero-3-phosphocholine. It carries out the reaction 2 1-hexadecanoyl-sn-glycero-3-phosphoethanolamine = 1,2-dihexadecanoyl-sn-glycero-3-phosphoethanolamine + sn-glycero-3-phosphoethanolamine. The enzyme catalyses 1-O-hexadecyl-sn-glycero-3-phosphocholine + 1-hexadecanoyl-sn-glycero-3-phosphocholine = 1-O-hexadecyl-2-hexadecanoyl-sn-glycero-3-phosphocholine + sn-glycerol 3-phosphocholine. It catalyses the reaction a 1-O-(1Z-alkenyl)-sn-glycero-3-phosphoethanolamine + 1-hexadecanoyl-sn-glycero-3-phosphocholine = 1-O-(1Z)-alkenyl-2-hexadecanoyl-sn-glycero-3-phosphoethanolamine + sn-glycerol 3-phosphocholine. The catalysed reaction is 1-O-hexadecyl-sn-glycero-3-phosphocholine + 1-hexadecanoyl-sn-glycero-3-phosphoethanolamine = 1-O-hexadecyl-2-hexadecanoyl-sn-glycero-3-phosphocholine + sn-glycero-3-phosphoethanolamine. It carries out the reaction 1-octadecanoyl-2-(5Z,8Z,11Z,14Z)-eicosatetraenoyl-sn-glycero-3-phosphoethanolamine + 1-hexadecanoyl-sn-glycero-3-phosphocholine = 1-octadecanoyl-sn-glycero-3-phosphoethanolamine + 1-hexadecanoyl-2-(5Z,8Z,11Z,14Z-eicosatetraenoyl)-sn-glycero-3-phosphocholine. The enzyme catalyses 1-octadecanoyl-2-(5Z,8Z,11Z,14Z)-eicosatetraenoyl-sn-glycero-3-phosphoethanolamine + 1-O-hexadecyl-sn-glycero-3-phosphocholine = 1-octadecanoyl-sn-glycero-3-phosphoethanolamine + 1-O-hexadecyl-2-(5Z,8Z,11Z,14Z)-eicosatetraenoyl-sn-glycero-3-phosphocholine. It catalyses the reaction 1-hexadecanoyl-2-(9Z,12Z-octadecadienoyl)-sn-glycero-3-phosphocholine + a 1-O-(1Z-alkenyl)-sn-glycero-3-phosphoethanolamine = 1-O-(1Z-alkenyl)-2-(9Z,12Z-octadecadienoyl)-sn-glycero-3-phosphoethanolamine + 1-hexadecanoyl-sn-glycero-3-phosphocholine. The catalysed reaction is 1-hexadecanoyl-2-(5Z,8Z,11Z,14Z-eicosatetraenoyl)-sn-glycero-3-phosphocholine + a 1-O-(1Z-alkenyl)-sn-glycero-3-phosphoethanolamine = 1-O-(1Z)-alkenyl-2-(5Z,8Z,11Z,14Z)-eicosatetraenoyl-sn-glycero-3-phosphoethanolamine + 1-hexadecanoyl-sn-glycero-3-phosphocholine. Not regulated by calcium, coenzyme A or ATP. Lysophospholipase activity is inhibited by palmitoyl-CoA. Lysophospholipase and O-acyltransferase activities are inhibited by methylarachidonoylfluorophosphonate. Lysophospholipase activity is inhibited by phosphatidate or lysophosphatidate. O-acyltransferase activity is up-regulated at low concentration (10-20 uM) of phosphatidate or lysophosphatidate, but inhibited at higher concentrations. Functionally, calcium-independent phospholipase, lysophospholipase and O-acyltransferase involved in phospholipid remodeling with implications in endoplasmic reticulum membrane homeostasis and lipid droplet biogenesis. Preferentially hydrolyzes the ester bond of the fatty acyl group attached at the sn-2 position of phospholipids with choline and ethanolamine head groups, producing lysophospholipids that are used in deacylation-reacylation cycles. Transfers the sn-1 fatty acyl from one lysophospholipid molecule to the sn-2 position of another lysophospholipid to form diacyl, alkylacyl and alkenylacyl glycerophospholipids. Cleaves ester bonds but not alkyl or alkenyl ether bonds at sn-1 position of lysophospholipids. Catalyzes sn-2 fatty acyl transfer from phospholipids to the sn-2 position of 1-O-alkyl or 1-O-alkenyl lysophospholipids with lower efficiency. In response to dietary fatty acids, may play a role in the formation of nascent lipid droplets from the endoplasmic reticulum likely by regulating the phospholipid composition of these organelles. Its function is as follows. (Microbial infection) May play a role in replication and assembly of human hepatitis C virus (HCV). In response to HCV infection, promotes remodeling of host endoplasmic reticulum membranes to form organelle-like structures called membranous web, where HCV replication occur. Can further mediate translocation of replication complexes to lipid droplets to enable virion assembly. (Microbial infection) May facilitate human T-lymphotropic virus type 1 (HTLV-1) infection by promoting leukotriene B4 (LTB4) biosynthesis. LTB4 acts as a chemoattractant for HTLV-1-infected CD4-positive T cells and favors cell to cell viral transmission. The chain is Cytosolic phospholipase A2 gamma (PLA2G4C) from Homo sapiens (Human).